Consider the following 536-residue polypeptide: Portal protein (536 aa).

Belongs to the podoviridae portal protein family. In terms of assembly, homododecamer. Interacts with major capsid protein. Interacts with the tail tube protein gp11. Interacts with the terminase large subunit. Interacts with the internal virion protein gp14.

It localises to the virion. Forms the portal vertex of the capsid. This portal plays critical roles in head assembly, genome packaging, neck/tail attachment, and genome ejection. The portal protein multimerizes as a single ring-shaped homododecamer arranged around a central channel. The polypeptide is Portal protein (Escherichia phage T7 (Bacteriophage T7)).